Reading from the N-terminus, the 195-residue chain is NADH-quinone oxidoreductase subunit B (195 aa).

Residues Cys-74, Cys-75, Cys-139, and Cys-169 each contribute to the [4Fe-4S] cluster site.

This sequence belongs to the complex I 20 kDa subunit family. NDH-1 is composed of 14 different subunits. Subunits NuoB, C, D, E, F, and G constitute the peripheral sector of the complex. [4Fe-4S] cluster serves as cofactor.

The protein localises to the cell inner membrane. The enzyme catalyses a quinone + NADH + 5 H(+)(in) = a quinol + NAD(+) + 4 H(+)(out). In terms of biological role, NDH-1 shuttles electrons from NADH, via FMN and iron-sulfur (Fe-S) centers, to quinones in the respiratory chain. The immediate electron acceptor for the enzyme in this species is believed to be ubiquinone. Couples the redox reaction to proton translocation (for every two electrons transferred, four hydrogen ions are translocated across the cytoplasmic membrane), and thus conserves the redox energy in a proton gradient. This Methylorubrum extorquens (strain PA1) (Methylobacterium extorquens) protein is NADH-quinone oxidoreductase subunit B.